Consider the following 248-residue polypeptide: DNA repair protein RecO (248 aa).

The protein belongs to the RecO family.

Functionally, involved in DNA repair and RecF pathway recombination. The sequence is that of DNA repair protein RecO from Bacillus cereus (strain 03BB102).